Consider the following 327-residue polypeptide: Zinc transport protein ZntB (327 aa).

Topologically, residues 1–273 (MDAIKGSELQ…ARRTYTMSLM (273 aa)) are cytoplasmic. A helical membrane pass occupies residues 274–294 (AMVFLPSTFLTGLFGVNLGGI). Over 295 to 300 (PGNSWH) the chain is Periplasmic. Residues 301–321 (LGFSLFCLMLVVVIGGVAWWL) form a helical membrane-spanning segment. The Cytoplasmic portion of the chain corresponds to 322 to 327 (HRSKWL).

Belongs to the CorA metal ion transporter (MIT) (TC 1.A.35) family.

The protein localises to the cell inner membrane. The enzyme catalyses Zn(2+)(out) + H(+)(out) = Zn(2+)(in) + H(+)(in). Zinc transporter. Acts as a Zn(2+):proton symporter, which likely mediates zinc ion uptake. The sequence is that of Zinc transport protein ZntB from Klebsiella pneumoniae subsp. pneumoniae (strain ATCC 700721 / MGH 78578).